The primary structure comprises 242 residues: Pyridoxine 5'-phosphate synthase (242 aa).

Residue N9 participates in 3-amino-2-oxopropyl phosphate binding. Residue 11–12 (DH) coordinates 1-deoxy-D-xylulose 5-phosphate. R20 is a 3-amino-2-oxopropyl phosphate binding site. Catalysis depends on H45, which acts as the Proton acceptor. R47 and H52 together coordinate 1-deoxy-D-xylulose 5-phosphate. E72 functions as the Proton acceptor in the catalytic mechanism. T102 is a 1-deoxy-D-xylulose 5-phosphate binding site. Residue H193 is the Proton donor of the active site. 3-amino-2-oxopropyl phosphate-binding positions include G194 and 215–216 (GH).

Belongs to the PNP synthase family. In terms of assembly, homooctamer; tetramer of dimers.

It is found in the cytoplasm. It carries out the reaction 3-amino-2-oxopropyl phosphate + 1-deoxy-D-xylulose 5-phosphate = pyridoxine 5'-phosphate + phosphate + 2 H2O + H(+). It participates in cofactor biosynthesis; pyridoxine 5'-phosphate biosynthesis; pyridoxine 5'-phosphate from D-erythrose 4-phosphate: step 5/5. Functionally, catalyzes the complicated ring closure reaction between the two acyclic compounds 1-deoxy-D-xylulose-5-phosphate (DXP) and 3-amino-2-oxopropyl phosphate (1-amino-acetone-3-phosphate or AAP) to form pyridoxine 5'-phosphate (PNP) and inorganic phosphate. The sequence is that of Pyridoxine 5'-phosphate synthase from Idiomarina loihiensis (strain ATCC BAA-735 / DSM 15497 / L2-TR).